The primary structure comprises 296 residues: Nucleotide-binding protein Pnec_1620 (296 aa).

An ATP-binding site is contributed by 8 to 15 (GISGSGKS). 57-60 (DARR) lines the GTP pocket.

The protein belongs to the RapZ-like family.

In terms of biological role, displays ATPase and GTPase activities. This is Nucleotide-binding protein Pnec_1620 from Polynucleobacter necessarius subsp. necessarius (strain STIR1).